A 55-amino-acid chain; its full sequence is Large ribosomal subunit protein bL33 (55 aa).

It belongs to the bacterial ribosomal protein bL33 family.

In Roseobacter denitrificans (strain ATCC 33942 / OCh 114) (Erythrobacter sp. (strain OCh 114)), this protein is Large ribosomal subunit protein bL33.